Reading from the N-terminus, the 206-residue chain is LexA repressor (206 aa).

The segment at residues 28 to 48 (RAEIARELGFRSANAAEEHLK) is a DNA-binding region (H-T-H motif). Active-site for autocatalytic cleavage activity residues include S123 and K160.

This sequence belongs to the peptidase S24 family. Homodimer.

It carries out the reaction Hydrolysis of Ala-|-Gly bond in repressor LexA.. Functionally, represses a number of genes involved in the response to DNA damage (SOS response), including recA and lexA. In the presence of single-stranded DNA, RecA interacts with LexA causing an autocatalytic cleavage which disrupts the DNA-binding part of LexA, leading to derepression of the SOS regulon and eventually DNA repair. The sequence is that of LexA repressor from Vibrio parahaemolyticus serotype O3:K6 (strain RIMD 2210633).